A 212-amino-acid polypeptide reads, in one-letter code: RNA chaperone ProQ (212 aa).

Residues 114-149 are disordered; it reads RIAKAGKTSAPAANAKKPVKKPVARRPKAAPSAKPV. A compositionally biased stretch (low complexity) spans 118 to 129; the sequence is AGKTSAPAANAK. A compositionally biased stretch (basic residues) spans 130 to 141; it reads KPVKKPVARRPK.

This sequence belongs to the ProQ family.

Its subcellular location is the cytoplasm. In terms of biological role, RNA chaperone with significant RNA binding, RNA strand exchange and RNA duplexing activities. The polypeptide is RNA chaperone ProQ (Shewanella piezotolerans (strain WP3 / JCM 13877)).